A 258-amino-acid chain; its full sequence is Isoprenyl transferase 1 (258 aa).

D39 is a catalytic residue. D39 lines the Mg(2+) pocket. Substrate is bound by residues 40–43 (GNRR), W44, R52, H57, and 85–87 (SND). N88 serves as the catalytic Proton acceptor. Substrate-binding positions include R92, R207, and 213–215 (RLS). E226 is a binding site for Mg(2+).

It belongs to the UPP synthase family. In terms of assembly, homodimer. The cofactor is Mg(2+).

Catalyzes the condensation of isopentenyl diphosphate (IPP) with allylic pyrophosphates generating different type of terpenoids. The sequence is that of Isoprenyl transferase 1 from Tropheryma whipplei (strain TW08/27) (Whipple's bacillus).